Reading from the N-terminus, the 106-residue chain is MTQLYETMYIIRPDLGEETVDQVINQYQSLLRDQGAEDVQTQHRGKRRLAYEIRKFREGIYVQMNYKAAGPLVANLQRAMRLSDEVIRYLTICQDEPDTDVEAATA.

This sequence belongs to the bacterial ribosomal protein bS6 family.

In terms of biological role, binds together with bS18 to 16S ribosomal RNA. The chain is Small ribosomal subunit protein bS6 from Cyanothece sp. (strain PCC 7425 / ATCC 29141).